We begin with the raw amino-acid sequence, 193 residues long: Coiled-coil domain-containing protein 184 (193 aa).

Residues 39–68 (GMKELMEHLKAQLQALFEDVRAMRGALDEQ) are a coiled coil. The disordered stretch occupies residues 101–176 (GLGVAGGKGS…LGENGPLVEP (76 aa)). Residues 135-146 (PDEEDEEEEEEK) show a composition bias toward acidic residues.

The polypeptide is Coiled-coil domain-containing protein 184 (Ccdc184) (Rattus norvegicus (Rat)).